The following is a 272-amino-acid chain: Undecaprenyl-diphosphatase (272 aa).

7 consecutive transmembrane segments (helical) span residues F2–I22, F43–Y63, W82–L102, L110–L130, Y185–L205, V224–L244, and F252–I272.

This sequence belongs to the UppP family.

Its subcellular location is the cell membrane. It carries out the reaction di-trans,octa-cis-undecaprenyl diphosphate + H2O = di-trans,octa-cis-undecaprenyl phosphate + phosphate + H(+). In terms of biological role, catalyzes the dephosphorylation of undecaprenyl diphosphate (UPP). Confers resistance to bacitracin. This is Undecaprenyl-diphosphatase from Lacticaseibacillus paracasei (strain ATCC 334 / BCRC 17002 / CCUG 31169 / CIP 107868 / KCTC 3260 / NRRL B-441) (Lactobacillus paracasei).